The following is a 115-amino-acid chain: Large ribosomal subunit protein bL19 (115 aa).

This sequence belongs to the bacterial ribosomal protein bL19 family.

In terms of biological role, this protein is located at the 30S-50S ribosomal subunit interface and may play a role in the structure and function of the aminoacyl-tRNA binding site. This Hydrogenovibrio crunogenus (strain DSM 25203 / XCL-2) (Thiomicrospira crunogena) protein is Large ribosomal subunit protein bL19.